The primary structure comprises 188 residues: Segregation and condensation protein B (188 aa).

It belongs to the ScpB family. Homodimer. Homodimerization may be required to stabilize the binding of ScpA to the Smc head domains. Component of a cohesin-like complex composed of ScpA, ScpB and the Smc homodimer, in which ScpA and ScpB bind to the head domain of Smc. The presence of the three proteins is required for the association of the complex with DNA.

The protein localises to the cytoplasm. Participates in chromosomal partition during cell division. May act via the formation of a condensin-like complex containing Smc and ScpA that pull DNA away from mid-cell into both cell halves. This Lactococcus lactis subsp. lactis (strain IL1403) (Streptococcus lactis) protein is Segregation and condensation protein B.